A 168-amino-acid chain; its full sequence is ADP-ribosylation factor-like protein 2-binding protein (168 aa).

The protein belongs to the ARL2BP family.

Its subcellular location is the cytoplasm. It localises to the mitochondrion intermembrane space. It is found in the cytoskeleton. The protein localises to the microtubule organizing center. The protein resides in the centrosome. Its subcellular location is the nucleus. It localises to the spindle. It is found in the cilium basal body. Plays a role as an effector of the ADP-ribosylation factor-like protein 2, ARL2. The protein is ADP-ribosylation factor-like protein 2-binding protein (arl2bp) of Danio rerio (Zebrafish).